The primary structure comprises 478 residues: Puromycin-sensitive aminopeptidase-like protein (478 aa).

Residues E180 and 316 to 320 (GAMEN) each bind substrate. H352 is a binding site for Zn(2+). Catalysis depends on E353, which acts as the Proton acceptor. Zn(2+)-binding residues include H356 and E375.

Belongs to the peptidase M1 family. The cofactor is Zn(2+).

Its function is as follows. Aminopeptidase with broad substrate specificity to several peptides. In Homo sapiens (Human), this protein is Puromycin-sensitive aminopeptidase-like protein (NPEPPSL1).